A 117-amino-acid polypeptide reads, in one-letter code: G antigen 6 (117 aa).

A disordered region spans residues 1–117; sequence MSWRGRSTYY…PEEGEKQSQC (117 aa). 2 stretches are compositionally biased toward acidic residues: residues 32 to 45 and 87 to 96; these read FSDE…EEGE and ECEDGPDGQE. Positions 103 to 117 are enriched in basic and acidic residues; it reads EEVKTPEEGEKQSQC.

It belongs to the GAGE family. Expressed in a variety of tumor tissues but not in normal tissues, except testis.

The chain is G antigen 6 (GAGE6) from Homo sapiens (Human).